Consider the following 321-residue polypeptide: GTP cyclohydrolase FolE2 (321 aa).

The protein belongs to the GTP cyclohydrolase IV family.

It catalyses the reaction GTP + H2O = 7,8-dihydroneopterin 3'-triphosphate + formate + H(+). It participates in cofactor biosynthesis; 7,8-dihydroneopterin triphosphate biosynthesis; 7,8-dihydroneopterin triphosphate from GTP: step 1/1. Its function is as follows. Converts GTP to 7,8-dihydroneopterin triphosphate. This chain is GTP cyclohydrolase FolE2, found in Paracoccus denitrificans (strain Pd 1222).